A 181-amino-acid chain; its full sequence is Adenine phosphoribosyltransferase (181 aa).

This sequence belongs to the purine/pyrimidine phosphoribosyltransferase family. Homodimer.

It is found in the cytoplasm. It catalyses the reaction AMP + diphosphate = 5-phospho-alpha-D-ribose 1-diphosphate + adenine. Its pathway is purine metabolism; AMP biosynthesis via salvage pathway; AMP from adenine: step 1/1. Catalyzes a salvage reaction resulting in the formation of AMP, that is energically less costly than de novo synthesis. In Vibrio parahaemolyticus serotype O3:K6 (strain RIMD 2210633), this protein is Adenine phosphoribosyltransferase.